Reading from the N-terminus, the 157-residue chain is 6,7-dimethyl-8-ribityllumazine synthase (157 aa).

5-amino-6-(D-ribitylamino)uracil contacts are provided by residues Trp-27, 59–61 (AIE), and 81–83 (VVI). Position 86-87 (86-87 (ET)) interacts with (2S)-2-hydroxy-3-oxobutyl phosphate. His-89 acts as the Proton donor in catalysis. Residue Asn-114 coordinates 5-amino-6-(D-ribitylamino)uracil. Arg-128 serves as a coordination point for (2S)-2-hydroxy-3-oxobutyl phosphate.

This sequence belongs to the DMRL synthase family. As to quaternary structure, homopentamer.

It carries out the reaction (2S)-2-hydroxy-3-oxobutyl phosphate + 5-amino-6-(D-ribitylamino)uracil = 6,7-dimethyl-8-(1-D-ribityl)lumazine + phosphate + 2 H2O + H(+). Its pathway is cofactor biosynthesis; riboflavin biosynthesis; riboflavin from 2-hydroxy-3-oxobutyl phosphate and 5-amino-6-(D-ribitylamino)uracil: step 1/2. Functionally, catalyzes the formation of 6,7-dimethyl-8-ribityllumazine by condensation of 5-amino-6-(D-ribitylamino)uracil with 3,4-dihydroxy-2-butanone 4-phosphate. This is the penultimate step in the biosynthesis of riboflavin. The polypeptide is 6,7-dimethyl-8-ribityllumazine synthase (Mycolicibacterium vanbaalenii (strain DSM 7251 / JCM 13017 / BCRC 16820 / KCTC 9966 / NRRL B-24157 / PYR-1) (Mycobacterium vanbaalenii)).